Consider the following 178-residue polypeptide: NADH-quinone oxidoreductase subunit I 2 (178 aa).

2 consecutive 4Fe-4S ferredoxin-type domains span residues 46–78 (IVLTRDPDGGERCVACYLCSAVCPVSCISMQAA) and 88–117 (AWFRINFARCIYCGLCEEACPTSAIQLTPF). [4Fe-4S] cluster-binding residues include cysteine 58, cysteine 61, cysteine 64, cysteine 68, cysteine 97, cysteine 100, cysteine 103, and cysteine 107.

The protein belongs to the complex I 23 kDa subunit family. As to quaternary structure, NDH-1 is composed of 14 different subunits. Subunits NuoA, H, J, K, L, M, N constitute the membrane sector of the complex. The cofactor is [4Fe-4S] cluster.

The protein resides in the cell inner membrane. The catalysed reaction is a quinone + NADH + 5 H(+)(in) = a quinol + NAD(+) + 4 H(+)(out). Functionally, NDH-1 shuttles electrons from NADH, via FMN and iron-sulfur (Fe-S) centers, to quinones in the respiratory chain. The immediate electron acceptor for the enzyme in this species is believed to be ubiquinone. Couples the redox reaction to proton translocation (for every two electrons transferred, four hydrogen ions are translocated across the cytoplasmic membrane), and thus conserves the redox energy in a proton gradient. This Syntrophobacter fumaroxidans (strain DSM 10017 / MPOB) protein is NADH-quinone oxidoreductase subunit I 2.